The chain runs to 340 residues: Very-long-chain 3-oxoacyl-CoA reductase (340 aa).

A helical membrane pass occupies residues 23–43 (LQYTFAALGALYVLRGALSFV). Residues Val68, Arg109, Asp123, Asp131, Asn150, Lys185, Tyr217, Lys221, Val250, and Thr252 each coordinate NADP(+). Catalysis depends on Tyr217, which acts as the Proton donor. Lys221 serves as the catalytic Lowers pKa of active site Tyr.

Belongs to the short-chain dehydrogenases/reductases (SDR) family.

It localises to the endoplasmic reticulum membrane. The catalysed reaction is a very-long-chain (3R)-3-hydroxyacyl-CoA + NADP(+) = a very-long-chain 3-oxoacyl-CoA + NADPH + H(+). Its pathway is lipid metabolism; fatty acid biosynthesis. Its function is as follows. Component of the microsomal membrane bound fatty acid elongation system, which produces the 26-carbon very long-chain fatty acids (VLCFA) from palmitate. Catalyzes the reduction of the 3-ketoacyl-CoA intermediate that is formed in each cycle of fatty acid elongation. VLCFAs serve as precursors for ceramide and sphingolipids. The sequence is that of Very-long-chain 3-oxoacyl-CoA reductase from Podospora anserina (strain S / ATCC MYA-4624 / DSM 980 / FGSC 10383) (Pleurage anserina).